The following is a 334-amino-acid chain: Formamidase (334 aa).

In terms of domain architecture, CN hydrolase spans 14–260; the sequence is FLVAAIQFPV…WEIVTGEIYP (247 aa). The active-site Proton acceptor is the Glu60. Lys133 acts as the Proton donor in catalysis. Residue Cys166 is the Nucleophile of the active site.

This sequence belongs to the carbon-nitrogen hydrolase superfamily. Aliphatic amidase family.

The enzyme catalyses formamide + H2O = formate + NH4(+). Is an aliphatic amidase with a restricted substrate specificity, as it only hydrolyzes formamide. This Helicobacter pylori (strain Shi470) protein is Formamidase.